We begin with the raw amino-acid sequence, 24 residues long: Brevinin-1PTb (24 aa).

The cysteines at positions 18 and 24 are disulfide-linked.

As to expression, expressed by the skin glands.

It localises to the secreted. Its function is as follows. Has antibacterial activity against the Gram-positive bacterium S.aureus ATCC 25923 and the Gram-negative bacterium E.coli ATCC 25726. The sequence is that of Brevinin-1PTb from Pulchrana picturata (Malaysian fire frog).